Consider the following 335-residue polypeptide: L-threo-3-deoxy-hexylosonate aldolase (335 aa).

A substrate-binding site is contributed by 50–51 (SN). Lysine 175 functions as the Schiff-base intermediate with substrate in the catalytic mechanism.

The protein belongs to the DapA family.

The catalysed reaction is 2-dehydro-3-deoxy-L-galactonate = L-glyceraldehyde + pyruvate. The protein operates within carbohydrate acid metabolism. Its function is as follows. Mediates the conversion of 2-dehydro-3-deoxy-L-galactonate to pyruvate and L-glyceraldehyde in D-galacturonate catabolic process. This Aspergillus niger protein is L-threo-3-deoxy-hexylosonate aldolase (gaaC).